The following is a 196-amino-acid chain: Probable histone chaperone ASF1A (196 aa).

Residues 146–157 (VTKFPIDFHPEE) are compositionally biased toward basic and acidic residues. Residues 146-196 (VTKFPIDFHPEEEQTAATAAPPEQSDEQQPNVNGEAQVLPDQSVEPKPEES) form a disordered region.

The protein belongs to the ASF1 family. Interacts with histone H3 and histone H4. Component of the HIRA complex made of UBN1, UBN2, ASF1A, CABIN1 and HIRA. Interacts with HIRA. As to expression, expressed in leaves and flower buds.

It is found in the nucleus. Its subcellular location is the nucleolus. In terms of biological role, histone chaperone that facilitates histone deposition and histone exchange and removal during nucleosome assembly and disassembly. While encoded by a region of the Arabidopsis thaliana genome that is homologous to the Brassica S-locus for self incompatibility, this protein may not play the same role in Arabidopsis thaliana. The polypeptide is Probable histone chaperone ASF1A (ASF1A) (Arabidopsis thaliana (Mouse-ear cress)).